Here is a 28-residue protein sequence, read N- to C-terminus: Chaperonin GroEL (28 aa).

Belongs to the chaperonin (HSP60) family. As to quaternary structure, forms a cylinder of 14 subunits composed of two heptameric rings stacked back-to-back. Interacts with the co-chaperonin GroES.

It localises to the cytoplasm. It catalyses the reaction ATP + H2O + a folded polypeptide = ADP + phosphate + an unfolded polypeptide.. Together with its co-chaperonin GroES, plays an essential role in assisting protein folding. The GroEL-GroES system forms a nano-cage that allows encapsulation of the non-native substrate proteins and provides a physical environment optimized to promote and accelerate protein folding. This Mycolicibacterium smegmatis (Mycobacterium smegmatis) protein is Chaperonin GroEL.